The primary structure comprises 201 residues: Peptidyl-tRNA hydrolase (201 aa).

Tyr14 contributes to the tRNA binding site. His19 functions as the Proton acceptor in the catalytic mechanism. 3 residues coordinate tRNA: Phe64, Asn66, and Asn112.

Belongs to the PTH family. In terms of assembly, monomer.

The protein localises to the cytoplasm. It catalyses the reaction an N-acyl-L-alpha-aminoacyl-tRNA + H2O = an N-acyl-L-amino acid + a tRNA + H(+). Functionally, hydrolyzes ribosome-free peptidyl-tRNAs (with 1 or more amino acids incorporated), which drop off the ribosome during protein synthesis, or as a result of ribosome stalling. In terms of biological role, catalyzes the release of premature peptidyl moieties from peptidyl-tRNA molecules trapped in stalled 50S ribosomal subunits, and thus maintains levels of free tRNAs and 50S ribosomes. This chain is Peptidyl-tRNA hydrolase, found in Rhodopseudomonas palustris (strain BisA53).